Here is a 353-residue protein sequence, read N- to C-terminus: Photosystem II D2 protein (353 aa).

Thr2 carries the post-translational modification N-acetylthreonine. Residue Thr2 is modified to Phosphothreonine. Residues 41-61 (CAYFAVGGWFTGTTFVTSWYT) form a helical membrane-spanning segment. Residue His118 participates in chlorophyll a binding. The helical transmembrane segment at 125–141 (GFMLRQFELARSVQLRP) threads the bilayer. Gln130 and Asn143 together coordinate pheophytin a. A helical transmembrane segment spans residues 153 to 166 (VFVSVFLIYPLGQS). His198 is a binding site for chlorophyll a. Residues 208–228 (AALLCAIHGATVENTLFEDGD) form a helical membrane-spanning segment. A plastoquinone-binding residues include His215 and Phe262. Fe cation is bound at residue His215. His269 contacts Fe cation. Residues 279–295 (GLWMSALGVVGLALNLR) traverse the membrane as a helical segment.

It belongs to the reaction center PufL/M/PsbA/D family. As to quaternary structure, PSII is composed of 1 copy each of membrane proteins PsbA, PsbB, PsbC, PsbD, PsbE, PsbF, PsbH, PsbI, PsbJ, PsbK, PsbL, PsbM, PsbT, PsbX, PsbY, PsbZ, Psb30/Ycf12, at least 3 peripheral proteins of the oxygen-evolving complex and a large number of cofactors. It forms dimeric complexes. It depends on The D1/D2 heterodimer binds P680, chlorophylls that are the primary electron donor of PSII, and subsequent electron acceptors. It shares a non-heme iron and each subunit binds pheophytin, quinone, additional chlorophylls, carotenoids and lipids. There is also a Cl(-1) ion associated with D1 and D2, which is required for oxygen evolution. The PSII complex binds additional chlorophylls, carotenoids and specific lipids. as a cofactor.

It localises to the plastid. Its subcellular location is the chloroplast thylakoid membrane. It carries out the reaction 2 a plastoquinone + 4 hnu + 2 H2O = 2 a plastoquinol + O2. Photosystem II (PSII) is a light-driven water:plastoquinone oxidoreductase that uses light energy to abstract electrons from H(2)O, generating O(2) and a proton gradient subsequently used for ATP formation. It consists of a core antenna complex that captures photons, and an electron transfer chain that converts photonic excitation into a charge separation. The D1/D2 (PsbA/PsbD) reaction center heterodimer binds P680, the primary electron donor of PSII as well as several subsequent electron acceptors. D2 is needed for assembly of a stable PSII complex. In Guizotia abyssinica (Niger), this protein is Photosystem II D2 protein.